Here is a 450-residue protein sequence, read N- to C-terminus: tRNA modification GTPase MnmE (450 aa).

The (6S)-5-formyl-5,6,7,8-tetrahydrofolate site is built by Arg-20, Glu-78, and Lys-117. Positions 211 to 372 (GLRMVIVGKP…LEESIYRETQ (162 aa)) constitute a TrmE-type G domain. Asn-221 provides a ligand contact to K(+). GTP is bound by residues 221-226 (NVGKST), 240-246 (TDIPGTT), 265-268 (DTAG), 326-329 (NKVD), and 353-355 (SAL). Ser-225 contributes to the Mg(2+) binding site. K(+) is bound by residues Thr-240, Ile-242, and Thr-245. Thr-246 contacts Mg(2+). Lys-450 provides a ligand contact to (6S)-5-formyl-5,6,7,8-tetrahydrofolate.

It belongs to the TRAFAC class TrmE-Era-EngA-EngB-Septin-like GTPase superfamily. TrmE GTPase family. In terms of assembly, homodimer. Heterotetramer of two MnmE and two MnmG subunits. K(+) serves as cofactor.

Its subcellular location is the cytoplasm. Functionally, exhibits a very high intrinsic GTPase hydrolysis rate. Involved in the addition of a carboxymethylaminomethyl (cmnm) group at the wobble position (U34) of certain tRNAs, forming tRNA-cmnm(5)s(2)U34. The chain is tRNA modification GTPase MnmE from Thermotoga maritima (strain ATCC 43589 / DSM 3109 / JCM 10099 / NBRC 100826 / MSB8).